Reading from the N-terminus, the 357-residue chain is DNA primase small subunit PriS (357 aa).

Catalysis depends on residues Asp105, Asp107, and Asp259.

This sequence belongs to the eukaryotic-type primase small subunit family. As to quaternary structure, heterodimer of a small subunit (PriS) and a large subunit (PriL). The cofactor is Mg(2+). Mn(2+) is required as a cofactor.

Catalytic subunit of DNA primase, an RNA polymerase that catalyzes the synthesis of short RNA molecules used as primers for DNA polymerase during DNA replication. The small subunit contains the primase catalytic core and has DNA synthesis activity on its own. Binding to the large subunit stabilizes and modulates the activity, increasing the rate of DNA synthesis while decreasing the length of the DNA fragments, and conferring RNA synthesis capability. The DNA polymerase activity may enable DNA primase to also catalyze primer extension after primer synthesis. May also play a role in DNA repair. The sequence is that of DNA primase small subunit PriS from Methanococcus maripaludis (strain DSM 14266 / JCM 13030 / NBRC 101832 / S2 / LL).